We begin with the raw amino-acid sequence, 198 residues long: Probable chemoreceptor glutamine deamidase CheD (198 aa).

The protein belongs to the CheD family.

It catalyses the reaction L-glutaminyl-[protein] + H2O = L-glutamyl-[protein] + NH4(+). Probably deamidates glutamine residues to glutamate on methyl-accepting chemotaxis receptors (MCPs), playing an important role in chemotaxis. This is Probable chemoreceptor glutamine deamidase CheD from Xanthomonas axonopodis pv. citri (strain 306).